A 122-amino-acid polypeptide reads, in one-letter code: Ferredoxin (122 aa).

A disordered region spans residues methionine 1–lysine 33. The targeting peptide stretch occupies residues threonine 8–proline 14. The 2Fe-2S ferredoxin-type domain occupies alanine 40 to glutamate 122. Positions 75, 80, 83, and 117 each coordinate [2Fe-2S] cluster.

It belongs to the 2Fe2S plant-type ferredoxin family. [2Fe-2S] cluster is required as a cofactor.

It is found in the encapsulin nanocompartment. Its function is as follows. Cargo protein of a type 1 encapsulin nanocompartment. An iron-binding protein probably involved in iron mineralization in the encapsulin nanocompartment. 2 different cargo proteins have been identified (IMEF and Fer); when both are expressed in E.coli with the shell protein only IMEF is detected within the nanocompartment. E.coli expressing all 3 genes stores the largest amount of iron and is protected from Fe/H2O2-induced oxidative stress. This Bacillus thermotolerans (Quasibacillus thermotolerans) protein is Ferredoxin.